Reading from the N-terminus, the 185-residue chain is Sarcoplasmic calcium-binding proteins II, V, VI, and VII (185 aa).

4 EF-hand domains span residues 5-41, 57-92, 102-137, and 138-173; these read FQKQ…YKEV, SLED…TIAT, WCQN…FQLQ, and CADV…TSPA. Positions 19, 21, 23, 25, 30, 70, 72, 74, 81, 115, 117, 119, and 126 each coordinate Ca(2+).

Functionally, like parvalbumins, SCPs seem to be more abundant in fast contracting muscles, but no functional relationship can be established from this distribution. The polypeptide is Sarcoplasmic calcium-binding proteins II, V, VI, and VII (Branchiostoma lanceolatum (Common lancelet)).